The chain runs to 334 residues: Leukocyte cell-derived chemotaxin 1 (334 aa).

The chain crosses the membrane as a helical span at residues 46 to 66; the sequence is VVLISGAVLLLFGAIGAFYFW. One can recognise a BRICHOS domain in the interval 105 to 201; that stretch reads GSGAEEAIEV…LCGDLPIFWL (97 aa). Cysteines 132 and 193 form a disulfide. The propeptide occupies 211 to 214; sequence RERR. The interval 212–270 is disordered; the sequence is ERREVVRNSAPSTTRRPHSEPRGNAGPGRLSNGTRPNVQDDAEPFNPDNPYHQQEGESM. The N-linked (GlcNAc...) asparagine glycan is linked to asparagine 243. Intrachain disulfides connect cysteine 282/cysteine 286, cysteine 283/cysteine 323, cysteine 293/cysteine 317, and cysteine 297/cysteine 313.

It belongs to the chondromodulin-1 family. Post-translationally, after cleavage, the post-translationally modified ChM-I is secreted as a glycoprotein. Detected in the four cardiac valves, valvular interstitial cells and extracellular matrix (at protein level).

It is found in the secreted. It localises to the extracellular space. The protein localises to the extracellular matrix. Its subcellular location is the endomembrane system. Its function is as follows. Bifunctional growth regulator that stimulates the growth of cultured chondrocytes in the presence of basic fibroblast growth factor (FGF) but inhibits the growth of cultured vascular endothelial cells. May contribute to the rapid growth of cartilage and vascular invasion prior to the replacement of cartilage by bone during endochondral bone development. Inhibits in vitro tube formation and mobilization of endothelial cells. Plays a role as antiangiogenic factor in cardiac valves to suppress neovascularization. The protein is Leukocyte cell-derived chemotaxin 1 of Mus musculus (Mouse).